Here is a 206-residue protein sequence, read N- to C-terminus: MTKVKICGITTLEDALMAVEAGADALGFVFFEKSPRYIGPEAAARIIRELPPFVQVVGLFVNAELDFVNRTADTCGLDLVQLHGEESPAYCGLVRRRVMKAFRVRGAESLAALADYKVSAYLLDAYSPASHGGTGERFDWDHAVAAKGQGRIVLAGGLDPDNVAQAVAKVAPYAVDVSSGVELSPGRKDPEKVRRLIAEAKKIALI.

This sequence belongs to the TrpF family.

The enzyme catalyses N-(5-phospho-beta-D-ribosyl)anthranilate = 1-(2-carboxyphenylamino)-1-deoxy-D-ribulose 5-phosphate. It participates in amino-acid biosynthesis; L-tryptophan biosynthesis; L-tryptophan from chorismate: step 3/5. This Citrifermentans bemidjiense (strain ATCC BAA-1014 / DSM 16622 / JCM 12645 / Bem) (Geobacter bemidjiensis) protein is N-(5'-phosphoribosyl)anthranilate isomerase.